The chain runs to 175 residues: Peptide deformylase (175 aa).

Fe cation is bound by residues Cys-96 and His-138. Glu-139 is an active-site residue. His-142 provides a ligand contact to Fe cation.

This sequence belongs to the polypeptide deformylase family. The cofactor is Fe(2+).

It carries out the reaction N-terminal N-formyl-L-methionyl-[peptide] + H2O = N-terminal L-methionyl-[peptide] + formate. Functionally, removes the formyl group from the N-terminal Met of newly synthesized proteins. Requires at least a dipeptide for an efficient rate of reaction. N-terminal L-methionine is a prerequisite for activity but the enzyme has broad specificity at other positions. The protein is Peptide deformylase of Rhodopseudomonas palustris (strain BisB5).